Consider the following 321-residue polypeptide: Acyl-CoA 5-desaturase AL21 (321 aa).

Helical transmembrane passes span 42 to 62 (IFHIILVGGLHVLCLSAPFTF) and 64 to 84 (WSAFWLSLTLYAVCGVFGTTL). Fe cation contacts are provided by His-87, His-92, His-124, His-127, and His-128. Residues 87 to 92 (HRNLTH) carry the Histidine box-1 motif. The Histidine box-2 motif lies at 124 to 128 (HRYHH). Residues 190–210 (LQAALLYMFGGFPFIVWGMAV) form a helical membrane-spanning segment. Fe cation is bound by residues His-227, His-256, His-259, and His-260. A Histidine box-3 motif is present at residues 256–260 (HNNHH).

Belongs to the fatty acid desaturase type 1 family. Fe(2+) is required as a cofactor.

It is found in the membrane. The catalysed reaction is (11Z,14Z)-eicosadienoyl-CoA + AH2 + O2 = (5Z,11Z,14Z)-eicosatrienoyl-CoA + A + 2 H2O. The enzyme catalyses (11Z,14Z,17Z)-eicosatrienoyl-CoA + AH2 + O2 = (5Z,11Z,14Z,17Z)-eicosatetraenoyl-CoA + A + 2 H2O. It participates in lipid metabolism; polyunsaturated fatty acid biosynthesis. Its function is as follows. Catalyzes the desaturation of 20:2Delta(11,14) and 20:3Delta(11,14,17) to generate sciadonic acid (20:3Delta(5,11,14)) and juniperonic acid (20:4Delta(5,11,14,17)). The enzyme can also use 16:0 and 18:0 as substrates. This Anemone leveillei (Windflower) protein is Acyl-CoA 5-desaturase AL21.